The chain runs to 358 residues: HTH-type transcriptional regulator IpsA (358 aa).

Residues 8-63 enclose the HTH lacI-type domain; it reads GTLASIAAKLGISRTTVSNAYNRPEQLSAELRQRILDTAEDMGYLGPDPVARSLRT. The segment at residues 10–29 is a DNA-binding region (H-T-H motif); the sequence is LASIAAKLGISRTTVSNAYN.

In terms of assembly, homodimer.

Myo-inositol causes the dissociation of the IpsA-DNA complex in vitro. In terms of biological role, plays a role in the regulation of cell wall biogenesis. Inositol-dependent transcriptional activator of ino1, which encodes inositol phosphate synthase. Also regulates other target genes, which are most likely involved in the synthesis of inositol-derived cell wall components and mycothiol. Acts by binding to a conserved palindromic motif within the promoter regions. This is HTH-type transcriptional regulator IpsA from Corynebacterium glutamicum (strain ATCC 13032 / DSM 20300 / JCM 1318 / BCRC 11384 / CCUG 27702 / LMG 3730 / NBRC 12168 / NCIMB 10025 / NRRL B-2784 / 534).